The sequence spans 603 residues: Geraniol synthase Tps-5073G30, chloroplastic (603 aa).

The N-terminal 35 residues, 1-35 (MCSISQKVVIGLNKAAANNNLQNLDRRGFKTRCVS), are a transit peptide targeting the chloroplast. (2E)-geranyl diphosphate is bound by residues arginine 319, aspartate 356, aspartate 360, arginine 497, and aspartate 500. Residues aspartate 356 and aspartate 360 each coordinate Mg(2+). The short motif at 356 to 360 (DDVYD) is the DDXXD motif element. Positions 500, 504, and 508 each coordinate Mg(2+).

This sequence belongs to the terpene synthase family. Tpsb subfamily. Monomer. Mg(2+) is required as a cofactor. The cofactor is Mn(2+).

It localises to the plastid. The protein localises to the chloroplast. The enzyme catalyses (2E)-geranyl diphosphate + H2O = (2E)-geraniol + diphosphate. Its pathway is secondary metabolite biosynthesis; terpenoid biosynthesis. Functionally, monoterpene synthase (mono-TPS) involved in the biosynthesis of monoterpenes natural products. Catalyzes the conversion of (2E)-geranyl diphosphate (GPP) into geraniol. This Perilla frutescens (Beefsteak mint) protein is Geraniol synthase Tps-5073G30, chloroplastic.